Consider the following 758-residue polypeptide: EMILIN-3 (758 aa).

An N-terminal signal peptide occupies residues methionine 1 to alanine 21. The 77-residue stretch at histidine 54 to glutamate 130 folds into the EMI domain. Cystine bridges form between cysteine 58–cysteine 120, cysteine 85–cysteine 91, and cysteine 119–cysteine 128. N-linked (GlcNAc...) asparagine glycosylation is present at asparagine 65. The interval histidine 131–phenylalanine 178 is disordered. Residues serine 379–threonine 401 are a coiled coil. The N-linked (GlcNAc...) asparagine glycan is linked to asparagine 436. 2 coiled-coil regions span residues glycine 460 to proline 483 and alanine 528 to glutamate 567. N-linked (GlcNAc...) asparagine glycans are attached at residues asparagine 555 and asparagine 609. Coiled-coil stretches lie at residues arginine 642–histidine 677 and histidine 720–arginine 753. An N-linked (GlcNAc...) asparagine glycan is attached at asparagine 725.

The protein localises to the secreted. It localises to the extracellular space. Its subcellular location is the extracellular matrix. The protein resides in the cytoplasm. This Mus musculus (Mouse) protein is EMILIN-3 (Emilin3).